The sequence spans 404 residues: Methionine aminopeptidase 1D, mitochondrial (404 aa).

Residues M1–Y58 constitute a mitochondrion transit peptide. Residues V86–K109 are disordered. Residue H232 participates in substrate binding. Positions 249, 260, and 323 each coordinate a divalent metal cation. Substrate is bound at residue H330. 2 residues coordinate a divalent metal cation: E355 and E389.

It belongs to the peptidase M24A family. Methionine aminopeptidase type 1 subfamily. Requires Co(2+) as cofactor. Zn(2+) is required as a cofactor. Mn(2+) serves as cofactor. It depends on Fe(2+) as a cofactor.

The protein resides in the mitochondrion. It carries out the reaction Release of N-terminal amino acids, preferentially methionine, from peptides and arylamides.. Its function is as follows. Removes the N-terminal methionine from nascent proteins. The N-terminal methionine is often cleaved when the second residue in the primary sequence is small and uncharged (Met-Ala-, Cys, Gly, Pro, Ser, Thr, or Val). The chain is Methionine aminopeptidase 1D, mitochondrial (metap1d) from Dictyostelium discoideum (Social amoeba).